A 212-amino-acid polypeptide reads, in one-letter code: Stringent starvation protein A (212 aa).

The 79-residue stretch at 9–87 (SVMTLFSGPT…YLDERFPHPP (79 aa)) folds into the GST N-terminal domain. A GST C-terminal domain is found at 92–209 (YPVARGESRL…LTEAEREMRL (118 aa)).

Belongs to the GST superfamily. HSP26 family.

Forms an equimolar complex with the RNA polymerase holoenzyme (RNAP) but not with the core enzyme. The sequence is that of Stringent starvation protein A (sspA) from Escherichia coli O157:H7.